We begin with the raw amino-acid sequence, 154 residues long: Large ribosomal subunit protein uL13 (154 aa).

It belongs to the universal ribosomal protein uL13 family. Part of the 50S ribosomal subunit.

Its function is as follows. This protein is one of the early assembly proteins of the 50S ribosomal subunit, although it is not seen to bind rRNA by itself. It is important during the early stages of 50S assembly. The chain is Large ribosomal subunit protein uL13 from Rhizobium leguminosarum bv. trifolii (strain WSM2304).